Reading from the N-terminus, the 594-residue chain is Elongation factor 4 (594 aa).

Residues 2 to 184 (KNIRNFSIIA…TIVAKVPAPE (183 aa)) enclose the tr-type G domain. Residues 14–19 (DHGKST) and 131–134 (NKID) contribute to the GTP site.

This sequence belongs to the TRAFAC class translation factor GTPase superfamily. Classic translation factor GTPase family. LepA subfamily.

Its subcellular location is the cell inner membrane. It catalyses the reaction GTP + H2O = GDP + phosphate + H(+). In terms of biological role, required for accurate and efficient protein synthesis under certain stress conditions. May act as a fidelity factor of the translation reaction, by catalyzing a one-codon backward translocation of tRNAs on improperly translocated ribosomes. Back-translocation proceeds from a post-translocation (POST) complex to a pre-translocation (PRE) complex, thus giving elongation factor G a second chance to translocate the tRNAs correctly. Binds to ribosomes in a GTP-dependent manner. The protein is Elongation factor 4 of Francisella tularensis subsp. holarctica (strain FTNF002-00 / FTA).